The following is a 692-amino-acid chain: Ribonuclease R (692 aa).

In terms of domain architecture, RNB spans 204-525; the sequence is RKDLRDLLCF…IVHRLLFHPL (322 aa). The region spanning 563–648 is the S1 motif domain; sequence KKFLDEQPAT…LTQAIEWTLI (86 aa). The disordered stretch occupies residues 651–692; that stretch reads KERSSSKKKKAKAKSNATQVKKKSSSKKKKAVSKAKKNRGGK. Over residues 670–692 the composition is skewed to basic residues; it reads VKKKSSSKKKKAVSKAKKNRGGK.

It belongs to the RNR ribonuclease family. RNase R subfamily.

It is found in the cytoplasm. It catalyses the reaction Exonucleolytic cleavage in the 3'- to 5'-direction to yield nucleoside 5'-phosphates.. Functionally, 3'-5' exoribonuclease that releases 5'-nucleoside monophosphates and is involved in maturation of structured RNAs. The sequence is that of Ribonuclease R from Chlamydia muridarum (strain MoPn / Nigg).